The primary structure comprises 173 residues: Crossover junction endodeoxyribonuclease RuvC (173 aa).

Residues aspartate 11, glutamate 71, and aspartate 143 contribute to the active site. Residues aspartate 11, glutamate 71, and aspartate 143 each contribute to the Mg(2+) site.

Belongs to the RuvC family. In terms of assembly, homodimer which binds Holliday junction (HJ) DNA. The HJ becomes 2-fold symmetrical on binding to RuvC with unstacked arms; it has a different conformation from HJ DNA in complex with RuvA. In the full resolvosome a probable DNA-RuvA(4)-RuvB(12)-RuvC(2) complex forms which resolves the HJ. Mg(2+) serves as cofactor.

The protein localises to the cytoplasm. The enzyme catalyses Endonucleolytic cleavage at a junction such as a reciprocal single-stranded crossover between two homologous DNA duplexes (Holliday junction).. In terms of biological role, the RuvA-RuvB-RuvC complex processes Holliday junction (HJ) DNA during genetic recombination and DNA repair. Endonuclease that resolves HJ intermediates. Cleaves cruciform DNA by making single-stranded nicks across the HJ at symmetrical positions within the homologous arms, yielding a 5'-phosphate and a 3'-hydroxyl group; requires a central core of homology in the junction. The consensus cleavage sequence is 5'-(A/T)TT(C/G)-3'. Cleavage occurs on the 3'-side of the TT dinucleotide at the point of strand exchange. HJ branch migration catalyzed by RuvA-RuvB allows RuvC to scan DNA until it finds its consensus sequence, where it cleaves and resolves the cruciform DNA. The polypeptide is Crossover junction endodeoxyribonuclease RuvC (Brucella suis (strain ATCC 23445 / NCTC 10510)).